A 95-amino-acid polypeptide reads, in one-letter code: MSIDIETARRVAHLARIRVDEADLPALAGELSGILTFMEQLNEVDVEGIEPMTSVTPMRLKRRQDVVTDGDMQDKVLSNAPDAREGFFAVPKVVE.

It belongs to the GatC family. In terms of assembly, heterotrimer of A, B and C subunits.

It catalyses the reaction L-glutamyl-tRNA(Gln) + L-glutamine + ATP + H2O = L-glutaminyl-tRNA(Gln) + L-glutamate + ADP + phosphate + H(+). The catalysed reaction is L-aspartyl-tRNA(Asn) + L-glutamine + ATP + H2O = L-asparaginyl-tRNA(Asn) + L-glutamate + ADP + phosphate + 2 H(+). Allows the formation of correctly charged Asn-tRNA(Asn) or Gln-tRNA(Gln) through the transamidation of misacylated Asp-tRNA(Asn) or Glu-tRNA(Gln) in organisms which lack either or both of asparaginyl-tRNA or glutaminyl-tRNA synthetases. The reaction takes place in the presence of glutamine and ATP through an activated phospho-Asp-tRNA(Asn) or phospho-Glu-tRNA(Gln). In Cereibacter sphaeroides (strain ATCC 17023 / DSM 158 / JCM 6121 / CCUG 31486 / LMG 2827 / NBRC 12203 / NCIMB 8253 / ATH 2.4.1.) (Rhodobacter sphaeroides), this protein is Aspartyl/glutamyl-tRNA(Asn/Gln) amidotransferase subunit C.